A 419-amino-acid polypeptide reads, in one-letter code: UDP-N-acetylglucosamine 1-carboxyvinyltransferase 2 (419 aa).

Residue 24-25 (KN) coordinates phosphoenolpyruvate. R94 contacts UDP-N-acetyl-alpha-D-glucosamine. The Proton donor role is filled by C118. Residue C118 is modified to 2-(S-cysteinyl)pyruvic acid O-phosphothioketal. Residues 123–127 (RPIDQ), D307, and I329 contribute to the UDP-N-acetyl-alpha-D-glucosamine site.

It belongs to the EPSP synthase family. MurA subfamily.

The protein resides in the cytoplasm. It catalyses the reaction phosphoenolpyruvate + UDP-N-acetyl-alpha-D-glucosamine = UDP-N-acetyl-3-O-(1-carboxyvinyl)-alpha-D-glucosamine + phosphate. Its pathway is cell wall biogenesis; peptidoglycan biosynthesis. Its function is as follows. Cell wall formation. Adds enolpyruvyl to UDP-N-acetylglucosamine. This Staphylococcus epidermidis (strain ATCC 12228 / FDA PCI 1200) protein is UDP-N-acetylglucosamine 1-carboxyvinyltransferase 2.